Here is a 552-residue protein sequence, read N- to C-terminus: Olefin beta-lactone synthetase (552 aa).

Residues Thr182–Lys190, Thr316–Thr321, Asp425, and Arg440 contribute to the ATP site.

Belongs to the ATP-dependent AMP-binding enzyme family. Monomer.

The enzyme catalyses a (2R,3S)-2-alkyl-3-hydroxyalkanoate + ATP = a cis-3-alkyl-4-alkyloxetan-2-one + AMP + diphosphate. Functionally, involved in olefin biosynthesis. Catalyzes the conversion of beta-hydroxy acid substrates to beta-lactones in the presence of ATP. Can use all four stereoisomers of 2-hexyl-3-hydroxydecanoic acid. This chain is Olefin beta-lactone synthetase, found in Stenotrophomonas maltophilia (strain K279a).